We begin with the raw amino-acid sequence, 257 residues long: Meiotically up-regulated gene 14 protein (257 aa).

It localises to the cytoplasm. It is found in the nucleus. Has a role in meiosis. In Schizosaccharomyces pombe (strain 972 / ATCC 24843) (Fission yeast), this protein is Meiotically up-regulated gene 14 protein (mug14).